A 184-amino-acid chain; its full sequence is Ethylene-responsive transcription factor ERF122 (184 aa).

The AP2/ERF DNA-binding region spans 120 to 177; that stretch reads KYKGVRKKPSGKWAAEIWDPRSKSRRWLGTFLTAEMAAQSYNDAAAEYRARRGKTNGE.

It belongs to the AP2/ERF transcription factor family. ERF subfamily.

The protein resides in the nucleus. Functionally, probably acts as a transcriptional activator. Binds to the GCC-box pathogenesis-related promoter element. May be involved in the regulation of gene expression by stress factors and by components of stress signal transduction pathways. The polypeptide is Ethylene-responsive transcription factor ERF122 (ERF122) (Arabidopsis thaliana (Mouse-ear cress)).